A 478-amino-acid chain; its full sequence is Trigger factor (478 aa).

The PPIase FKBP-type domain maps to 162–243 (GDFVSIDLSA…VKSIKERELP (82 aa)). A disordered region spans residues 424 to 478 (KDTDGNDIDTTEFFGPSGGAQAEAEGADEADADSDADSDTEADSDTEADEADEAK). A compositionally biased stretch (acidic residues) spans 448–478 (EGADEADADSDADSDTEADSDTEADEADEAK).

This sequence belongs to the FKBP-type PPIase family. Tig subfamily.

The protein localises to the cytoplasm. The enzyme catalyses [protein]-peptidylproline (omega=180) = [protein]-peptidylproline (omega=0). Functionally, involved in protein export. Acts as a chaperone by maintaining the newly synthesized protein in an open conformation. Functions as a peptidyl-prolyl cis-trans isomerase. This chain is Trigger factor, found in Mycobacterium sp. (strain KMS).